A 423-amino-acid polypeptide reads, in one-letter code: Imidazolonepropionase (423 aa).

Residues histidine 78 and histidine 80 each coordinate Fe(3+). 2 residues coordinate Zn(2+): histidine 78 and histidine 80. Arginine 87, tyrosine 150, and histidine 183 together coordinate 4-imidazolone-5-propanoate. Residue tyrosine 150 participates in N-formimidoyl-L-glutamate binding. Histidine 247 serves as a coordination point for Fe(3+). Zn(2+) is bound at residue histidine 247. Glutamate 250 is a binding site for 4-imidazolone-5-propanoate. Residue aspartate 322 participates in Fe(3+) binding. Aspartate 322 lines the Zn(2+) pocket. N-formimidoyl-L-glutamate contacts are provided by asparagine 324 and glycine 326. Serine 327 is a 4-imidazolone-5-propanoate binding site.

This sequence belongs to the metallo-dependent hydrolases superfamily. HutI family. Requires Zn(2+) as cofactor. The cofactor is Fe(3+).

The protein resides in the cytoplasm. The enzyme catalyses 4-imidazolone-5-propanoate + H2O = N-formimidoyl-L-glutamate. It participates in amino-acid degradation; L-histidine degradation into L-glutamate; N-formimidoyl-L-glutamate from L-histidine: step 3/3. In terms of biological role, catalyzes the hydrolytic cleavage of the carbon-nitrogen bond in imidazolone-5-propanoate to yield N-formimidoyl-L-glutamate. It is the third step in the universal histidine degradation pathway. The chain is Imidazolonepropionase from Bacillus cereus (strain G9842).